A 391-amino-acid polypeptide reads, in one-letter code: 2,4,6-trihydroxybenzophenone synthase (391 aa).

Cys-165 is an active-site residue.

Belongs to the thiolase-like superfamily. Chalcone/stilbene synthases family. In terms of assembly, homodimer. Expressed in young fruit pericarp.

It catalyses the reaction benzoyl-CoA + 3 malonyl-CoA + 2 H(+) = 2,4,6-trihydroxybenzophenone + 3 CO2 + 4 CoA. Type III polyketide synthase involved in the biosynthesis of benzophenones and xanthones. Produces mainly 2,4,6-trihydroxybenzophenone together with minor amounts of tetraketide lactone, triketide lactone and diketide lactone. The preferred substrate is benzoyl-CoA, but can also use acetyl-CoA, phenylacetyl-CoA, hexanoyl-CoA, cinnamoyl-CoA, p-coumaroyl-CoA and salicoyl-CoA. The protein is 2,4,6-trihydroxybenzophenone synthase (BPS) of Garcinia mangostana (Mangosteen).